The sequence spans 744 residues: CCR4-NOT transcription complex subunit 10 (744 aa).

The span at 1-16 (MAADKPADQGAEKHEG) shows a compositional bias: basic and acidic residues. Disordered regions lie at residues 1 to 26 (MAADKPADQGAEKHEGAGQSSGVTDQ), 183 to 204 (SGNKNGKSETGNNSSKDGSNPK), 475 to 522 (EQQD…PSSP), and 602 to 632 (VSLGISSNEQDQGSDKGENEAMESSGKRAPQ). Ala2 carries the N-acetylalanine modification. The span at 183-200 (SGNKNGKSETGNNSSKDG) shows a compositional bias: polar residues. The segment covering 496-506 (ESSESSETCSS) has biased composition (low complexity). Residues 602-612 (VSLGISSNEQD) are compositionally biased toward polar residues.

It belongs to the CNOT10 family. Component of the CCR4-NOT complex; distinct complexes seem to exist that differ in the participation of probably mutually exclusive catalytic subunits. CNOT10 and CNOT11 form a subcomplex docked to the CNOT1 scaffold.

The protein localises to the cytoplasm. It localises to the nucleus. In terms of biological role, component of the CCR4-NOT complex which is one of the major cellular mRNA deadenylases and is linked to various cellular processes including bulk mRNA degradation, miRNA-mediated repression, translational repression during translational initiation and general transcription regulation. Additional complex functions may be a consequence of its influence on mRNA expression. Is not required for association of CNOT7 to the CCR4-NOT complex. The polypeptide is CCR4-NOT transcription complex subunit 10 (Cnot10) (Rattus norvegicus (Rat)).